We begin with the raw amino-acid sequence, 154 residues long: UPF0178 protein GDI0551/Gdia_1457 (154 aa).

It belongs to the UPF0178 family.

This Gluconacetobacter diazotrophicus (strain ATCC 49037 / DSM 5601 / CCUG 37298 / CIP 103539 / LMG 7603 / PAl5) protein is UPF0178 protein GDI0551/Gdia_1457.